Reading from the N-terminus, the 389-residue chain is Glutamate 5-kinase (389 aa).

An ATP-binding site is contributed by K16. Residues S56, D143, and N155 each contribute to the substrate site. 175 to 176 provides a ligand contact to ATP; sequence SD. The PUA domain occupies 281 to 358; the sequence is AGELHVDDGA…AEIEAILGYA (78 aa).

It belongs to the glutamate 5-kinase family.

The protein resides in the cytoplasm. It carries out the reaction L-glutamate + ATP = L-glutamyl 5-phosphate + ADP. It functions in the pathway amino-acid biosynthesis; L-proline biosynthesis; L-glutamate 5-semialdehyde from L-glutamate: step 1/2. Functionally, catalyzes the transfer of a phosphate group to glutamate to form L-glutamate 5-phosphate. The polypeptide is Glutamate 5-kinase (Rhizobium etli (strain CIAT 652)).